An 867-amino-acid chain; its full sequence is Heat shock 70 kDa protein 17 (867 aa).

Positions methionine 1–serine 24 are cleaved as a signal peptide. Composition is skewed to polar residues over residues threonine 560 to glutamate 575 and aspartate 587 to alanine 598. 2 disordered regions span residues threonine 560–glycine 607 and proline 829–leucine 867. The span at proline 833–leucine 867 shows a compositional bias: basic and acidic residues. The Prevents secretion from ER signature appears at aspartate 865–leucine 867.

This sequence belongs to the heat shock protein 70 (TC 1.A.33) family. HSP110/SSE subfamily.

It is found in the endoplasmic reticulum lumen. This is Heat shock 70 kDa protein 17 (HSP70-17) from Arabidopsis thaliana (Mouse-ear cress).